The chain runs to 649 residues: Beta-galactosidase-1-like protein 3 (649 aa).

Glu203 functions as the Proton donor in the catalytic mechanism. The active-site Nucleophile is Glu277.

The protein belongs to the glycosyl hydrolase 35 family.

This Mus musculus (Mouse) protein is Beta-galactosidase-1-like protein 3 (Glb1l3).